We begin with the raw amino-acid sequence, 232 residues long: MFDIGFGELMLLFVIGLVVLGPERLPVAVRTVTGWIRAIRSMASTVQNELTQELKLQELQDSLKKVEEASKNNLSPELKASMEELREAAESMKKYFKGINSAALDPTEPHTIHNPLVTDPEALHDGVTPAEGDRQAEAPLMAPSVKASAPADSVANPGEPIAAAAIGQPAAASVDAASTSPSAKVSAPADSAANLATQAATPAAPAPAPEEPGRAATATGPASSTSPLNNDR.

A helical transmembrane segment spans residues Met-1–Gly-21. Disordered regions lie at residues Glu-108–Pro-129 and Ala-176–Arg-232. 2 stretches are compositionally biased toward low complexity: residues Ala-189–Ala-203 and Arg-214–Arg-232.

Belongs to the TatB family. In terms of assembly, the Tat system comprises two distinct complexes: a TatABC complex, containing multiple copies of TatA, TatB and TatC subunits, and a separate TatA complex, containing only TatA subunits. Substrates initially bind to the TatABC complex, which probably triggers association of the separate TatA complex to form the active translocon.

The protein localises to the cell inner membrane. Part of the twin-arginine translocation (Tat) system that transports large folded proteins containing a characteristic twin-arginine motif in their signal peptide across membranes. Together with TatC, TatB is part of a receptor directly interacting with Tat signal peptides. TatB may form an oligomeric binding site that transiently accommodates folded Tat precursor proteins before their translocation. This Sodalis glossinidius (strain morsitans) protein is Sec-independent protein translocase protein TatB.